Reading from the N-terminus, the 379-residue chain is DNA (cytosine-5)-methyltransferase (379 aa).

Residues 4-366 form the SAM-dependent MTase C5-type domain; sequence LRVLEFYSGI…KVLVSPNEEE (363 aa). The active site involves cysteine 78. The segment covering 178-192 has biased composition (basic and acidic residues); it reads KKEQDKHNEKVDENK. A disordered region spans residues 178–205; sequence KKEQDKHNEKVDENKLNNNSNNNNEQNK. Over residues 193-203 the composition is skewed to low complexity; that stretch reads LNNNSNNNNEQ.

The protein belongs to the class I-like SAM-binding methyltransferase superfamily. C5-methyltransferase family.

The protein localises to the nucleus. The enzyme catalyses a 2'-deoxycytidine in DNA + S-adenosyl-L-methionine = a 5-methyl-2'-deoxycytidine in DNA + S-adenosyl-L-homocysteine + H(+). In terms of biological role, involved in epigenetic gene silencing. Methylates specific cytosine residues in the retrotransposons DIRS-1 and Skipper. The protein is DNA (cytosine-5)-methyltransferase (dnmA) of Dictyostelium discoideum (Social amoeba).